The sequence spans 115 residues: SPbeta prophage-derived uncharacterized membrane protein YosE (115 aa).

3 consecutive transmembrane segments (helical) span residues 20–42 (IVVGLLIFVEALTMSLIVYYGLN), 58–78 (VHVTLPHAFVIGVLLNVFVKG), and 95–115 (GKSLFHSTFALIVLYVSTLFI).

Its subcellular location is the cell membrane. In Bacillus subtilis (strain 168), this protein is SPbeta prophage-derived uncharacterized membrane protein YosE (yosE).